Reading from the N-terminus, the 384-residue chain is Galactokinase (384 aa).

A substrate-binding site is contributed by 34 to 37 (EHTD). ATP is bound at residue 123–129 (SSGLSSS). Positions 129 and 161 each coordinate Mg(2+). Residue D173 is the Proton acceptor of the active site. Residue Y222 participates in substrate binding.

This sequence belongs to the GHMP kinase family. GalK subfamily.

Its subcellular location is the cytoplasm. The catalysed reaction is alpha-D-galactose + ATP = alpha-D-galactose 1-phosphate + ADP + H(+). The protein operates within carbohydrate metabolism; galactose metabolism. Functionally, catalyzes the transfer of the gamma-phosphate of ATP to D-galactose to form alpha-D-galactose-1-phosphate (Gal-1-P). The polypeptide is Galactokinase (Actinobacillus pleuropneumoniae serotype 3 (strain JL03)).